The sequence spans 480 residues: Glutamyl-tRNA(Gln) amidotransferase subunit A (480 aa).

Catalysis depends on charge relay system residues Lys-76 and Ser-151. The active-site Acyl-ester intermediate is the Ser-175.

Belongs to the amidase family. GatA subfamily. In terms of assembly, heterotrimer of A, B and C subunits.

The catalysed reaction is L-glutamyl-tRNA(Gln) + L-glutamine + ATP + H2O = L-glutaminyl-tRNA(Gln) + L-glutamate + ADP + phosphate + H(+). Its function is as follows. Allows the formation of correctly charged Gln-tRNA(Gln) through the transamidation of misacylated Glu-tRNA(Gln) in organisms which lack glutaminyl-tRNA synthetase. The reaction takes place in the presence of glutamine and ATP through an activated gamma-phospho-Glu-tRNA(Gln). In Exiguobacterium sibiricum (strain DSM 17290 / CCUG 55495 / CIP 109462 / JCM 13490 / 255-15), this protein is Glutamyl-tRNA(Gln) amidotransferase subunit A.